A 421-amino-acid chain; its full sequence is Conjugal transfer protein TraB (421 aa).

The next 8 membrane-spanning stretches (helical) occupy residues 33-53, 103-123, 144-164, 169-189, 193-213, 287-307, 366-386, and 388-408; these read LLILLSIAVGAVGWSGEALLL, LLLWLAASAGFVAVHAAFWPA, LAAAVLMGLPPFGITGWAHPL, ILFPGFGWWGLGATTAGLAMM, YWPAAAIALGGFWFWSAATWT, TVIAGAAVIDPGGYDNVMVTV, LIVWPILHSMLFSPAAIVATG, and GWWTEGTSIVAIQQAGVIAWA. The region spanning 222 to 421 is the CN hydrolase domain; that stretch reads KGVDLEQGQT…GRPVVTAFNT (200 aa).

It is found in the cell membrane. Its function is as follows. Enhances conjugal transfer of the Ti plasmid. The sequence is that of Conjugal transfer protein TraB (traB) from Agrobacterium fabrum (strain C58 / ATCC 33970) (Agrobacterium tumefaciens (strain C58)).